The sequence spans 353 residues: Cytochrome c biogenesis protein CcsA (353 aa).

A run of 8 helical transmembrane segments spans residues 15 to 35 (FAILFLTMLVYWGGAAFPNLP), 37 to 57 (LAALGTAGMAIANLCMATLLG), 68 to 88 (LSNLYESLFFLTWGITTVHLI), 97 to 117 (LVGVVTAPVAMLIAAFATMTL), 142 to 162 (VMMLSYSALMVGALLAIAFLI), 261 to 281 (IIGLGFPLLTIGIIAGGVWAN), 288 to 308 (WSWDPKETWALITWLVFAAYL), and 322 to 342 (AILAATGFVVVWICYLGVNLL).

This sequence belongs to the CcmF/CycK/Ccl1/NrfE/CcsA family. As to quaternary structure, may interact with ccs1.

It is found in the cellular thylakoid membrane. In terms of biological role, required during biogenesis of c-type cytochromes (cytochrome c6 and cytochrome f) at the step of heme attachment. The polypeptide is Cytochrome c biogenesis protein CcsA (Nostoc punctiforme (strain ATCC 29133 / PCC 73102)).